A 98-amino-acid polypeptide reads, in one-letter code: Small ribosomal subunit protein bS6 (98 aa).

It belongs to the bacterial ribosomal protein bS6 family.

Functionally, binds together with bS18 to 16S ribosomal RNA. The sequence is that of Small ribosomal subunit protein bS6 from Lacticaseibacillus paracasei (strain ATCC 334 / BCRC 17002 / CCUG 31169 / CIP 107868 / KCTC 3260 / NRRL B-441) (Lactobacillus paracasei).